A 209-amino-acid polypeptide reads, in one-letter code: Holliday junction branch migration complex subunit RuvA (209 aa).

Residues 1–70 are domain I; it reads MINYLRGQAI…EEQPLLYGFG (70 aa). Residues 71–149 are domain II; it reads TAPERELFRQ…AWRQLREATT (79 aa). The interval 150–158 is flexible linker; the sequence is TITAILPAA. The tract at residues 158–209 is domain III; sequence AAILEDVQMTLLALGYSQEEIDRAMAVLSQDALFSKNTQPEDWIKGAINWLG.

Belongs to the RuvA family. As to quaternary structure, homotetramer. Forms an RuvA(8)-RuvB(12)-Holliday junction (HJ) complex. HJ DNA is sandwiched between 2 RuvA tetramers; dsDNA enters through RuvA and exits via RuvB. An RuvB hexamer assembles on each DNA strand where it exits the tetramer. Each RuvB hexamer is contacted by two RuvA subunits (via domain III) on 2 adjacent RuvB subunits; this complex drives branch migration. In the full resolvosome a probable DNA-RuvA(4)-RuvB(12)-RuvC(2) complex forms which resolves the HJ.

Its subcellular location is the cytoplasm. Functionally, the RuvA-RuvB-RuvC complex processes Holliday junction (HJ) DNA during genetic recombination and DNA repair, while the RuvA-RuvB complex plays an important role in the rescue of blocked DNA replication forks via replication fork reversal (RFR). RuvA specifically binds to HJ cruciform DNA, conferring on it an open structure. The RuvB hexamer acts as an ATP-dependent pump, pulling dsDNA into and through the RuvAB complex. HJ branch migration allows RuvC to scan DNA until it finds its consensus sequence, where it cleaves and resolves the cruciform DNA. This Microcystis aeruginosa (strain NIES-843 / IAM M-2473) protein is Holliday junction branch migration complex subunit RuvA.